The sequence spans 188 residues: Probable nicotinate-nucleotide adenylyltransferase (188 aa).

It belongs to the NadD family.

It carries out the reaction nicotinate beta-D-ribonucleotide + ATP + H(+) = deamido-NAD(+) + diphosphate. The protein operates within cofactor biosynthesis; NAD(+) biosynthesis; deamido-NAD(+) from nicotinate D-ribonucleotide: step 1/1. Its function is as follows. Catalyzes the reversible adenylation of nicotinate mononucleotide (NaMN) to nicotinic acid adenine dinucleotide (NaAD). The protein is Probable nicotinate-nucleotide adenylyltransferase of Listeria welshimeri serovar 6b (strain ATCC 35897 / DSM 20650 / CCUG 15529 / CIP 8149 / NCTC 11857 / SLCC 5334 / V8).